A 100-amino-acid polypeptide reads, in one-letter code: Small ribosomal subunit protein uS14 (100 aa).

This sequence belongs to the universal ribosomal protein uS14 family. As to quaternary structure, part of the 30S ribosomal subunit. Contacts proteins S3 and S10.

Its function is as follows. Binds 16S rRNA, required for the assembly of 30S particles and may also be responsible for determining the conformation of the 16S rRNA at the A site. The chain is Small ribosomal subunit protein uS14 from Trichormus variabilis (strain ATCC 29413 / PCC 7937) (Anabaena variabilis).